The following is a 92-amino-acid chain: Small ribosomal subunit protein uS19 (92 aa).

The protein belongs to the universal ribosomal protein uS19 family.

Its function is as follows. Protein S19 forms a complex with S13 that binds strongly to the 16S ribosomal RNA. The protein is Small ribosomal subunit protein uS19 of Wigglesworthia glossinidia brevipalpis.